The chain runs to 379 residues: tRNA(Met) cytidine acetate ligase (379 aa).

ATP is bound by residues I7 to H20, G100, N153, and R178.

The protein belongs to the TmcAL family.

Its subcellular location is the cytoplasm. It catalyses the reaction cytidine(34) in elongator tRNA(Met) + acetate + ATP = N(4)-acetylcytidine(34) in elongator tRNA(Met) + AMP + diphosphate. In terms of biological role, catalyzes the formation of N(4)-acetylcytidine (ac(4)C) at the wobble position of elongator tRNA(Met), using acetate and ATP as substrates. First activates an acetate ion to form acetyladenylate (Ac-AMP) and then transfers the acetyl group to tRNA to form ac(4)C34. The polypeptide is tRNA(Met) cytidine acetate ligase (Staphylococcus aureus (strain Mu3 / ATCC 700698)).